Here is a 320-residue protein sequence, read N- to C-terminus: Heterogeneous nuclear ribonucleoprotein A1-like 2 (320 aa).

The segment at 4–94 (SASPKEPEQL…EPKRAVSRED (91 aa)) is globular A domain. 2 positions are modified to phosphoserine: S6 and S22. RRM domains are found at residues 14-97 (RKLF…DSQR) and 105-184 (KKIF…LPKQ). Positions 95 to 185 (SQRPGAHLTV…EVRKALPKQE (91 aa)) are globular B domain. Residues 181–216 (LPKQEMASASSSQRGRRGSGNFGGGRGDGFGGNDNF) are disordered. 4 positions are modified to asymmetric dimethylarginine; alternate: R194, R206, R218, and R225. 4 positions are modified to omega-N-methylarginine; alternate: R194, R206, R218, and R225. The span at 198-216 (GSGNFGGGRGDGFGGNDNF) shows a compositional bias: gly residues. Positions 218–240 (RGGNFSGRGGFGGSCGGGGYGGS) are RNA-binding RGG-box. The interval 268–305 (NQSSNFGPMKGGNFGGRSSGPYGGGGQYFAKPQNQGGY) is nuclear targeting sequence. The disordered stretch occupies residues 271–320 (SNFGPMKGGNFGGRSSGPYGGGGQYFAKPQNQGGYGVSSSSSSYGSGRRF). Residues 276-294 (MKGGNFGGRSSGPYGGGGQ) are compositionally biased toward gly residues. R284 is modified (omega-N-methylarginine). At K298 the chain carries N6-acetyllysine. Low complexity predominate over residues 307–320 (VSSSSSSYGSGRRF).

It is found in the nucleus. It localises to the cytoplasm. Its function is as follows. Involved in the packaging of pre-mRNA into hnRNP particles, transport of poly(A) mRNA from the nucleus to the cytoplasm and may modulate splice site selection. The polypeptide is Heterogeneous nuclear ribonucleoprotein A1-like 2 (HNRNPA1L2) (Homo sapiens (Human)).